Consider the following 471-residue polypeptide: Eremophilane O-acetyltransferase ORF8 (471 aa).

Belongs to the fumigaclavine B O-acetyltransferase family. In terms of assembly, monomer.

It functions in the pathway sesquiterpene biosynthesis. Its function is as follows. O-acetyltransferase; part of the gene cluster that mediates the biosynthesis of PR-toxin, a bicyclic sesquiterpene belonging to the eremophilane class and acting as a mycotoxin. The first step of the pathway is catalyzed by the aristolochene synthase which performs the cyclization of trans,trans-farnesyl diphosphate (FPP) to the bicyclic sesquiterpene aristolochene. Following the formation of aristolochene, the non-oxygenated aristolochene is converted to the trioxygenated intermediate eremofortin B, via 7-epi-neopetasone. This conversion appears to involve three enzymes, a hydroxysterol oxidase-like enzyme, the quinone-oxidase prx3 that forms the quinone-type-structure in the bicyclic nucleus of aristolochene with the C8-oxo group and the C-3 hydroxyl group, and the P450 monooxygenase ORF6 that introduces the epoxide at the double bond between carbons 1 and 2. No monoxy or dioxy-intermediates have been reported to be released to the broth, so these three early oxidative reactions may be coupled together. Eremofortin B is further oxidized by another P450 monooxygenase, that introduces a second epoxide between carbons 7 and 11 prior to acetylation to eremofortin A by the acetyltransferase ORF8. The second epoxidation may be performed by a second P450 monooxygenase. After the acetylation step, eremofortin A is converted to eremofortin C and then to PR-toxin. First the conversion of eremofortin A to eremofortin C proceeds by oxidation of the side chain of the molecule at C-12 and is catalyzed by the short-chain oxidoreductase prx1. The cytochrome P450 monooxygenase ORF6 is probably also involved in this step. The primary alcohol formed at C-12 is finally oxidized by the short-chain alcohol dehydrogenase prx4 that forms PR-toxin. This chain is Eremophilane O-acetyltransferase ORF8, found in Penicillium roqueforti (strain FM164).